A 1282-amino-acid polypeptide reads, in one-letter code: Indigoidine synthase (1282 aa).

The segment at A24 to L379 is adenylation. The Carrier domain occupies A937–V1012. Position 972 is an O-(pantetheine 4'-phosphoryl)serine (S972). Residues R1030 to E1138 form a thioesterase region.

It belongs to the ATP-dependent AMP-binding enzyme family. The cofactor is pantetheine 4'-phosphate.

It catalyses the reaction 2 FMN + 2 L-glutamine + 2 ATP + O2 = indigoidine + 2 FMNH2 + 2 AMP + 2 diphosphate + 2 H2O. The catalysed reaction is FMN + L-glutamine + ATP = 3-amino-1,5-dihydropyridine-2,6-dione + FMNH2 + AMP + diphosphate. The enzyme catalyses 2 3-amino-1,5-dihydropyridine-2,6-dione + O2 = indigoidine + 2 H2O. The protein operates within pigment biosynthesis. Functionally, nonribosomal peptide synthetase involved in the biosynthesis of the blue pigment indigoidine. Catalyzes the synthesis of the blue pigment using L-Gln as a substrate. Two glutamine molecules are cyclized and oxidized to form indigoidine. The polypeptide is Indigoidine synthase (Streptomyces lavendulae).